The chain runs to 943 residues: UvrABC system protein A (943 aa).

32–39 (GLSGSGKS) is an ATP binding site. A C4-type zinc finger spans residues 251–278 (CPVCGFTVPELEPRLFSFNAPFGSCPTC). ABC transporter domains follow at residues 308–589 (WNPI…KKSI) and 609–937 (GSGR…QYLK). An ATP-binding site is contributed by 641–648 (GVSGSGKS). The C4-type zinc finger occupies 740–766 (CEACSGDGIIKIEMHFLPDVYVPCEVC).

This sequence belongs to the ABC transporter superfamily. UvrA family. Forms a heterotetramer with UvrB during the search for lesions.

Its subcellular location is the cytoplasm. Functionally, the UvrABC repair system catalyzes the recognition and processing of DNA lesions. UvrA is an ATPase and a DNA-binding protein. A damage recognition complex composed of 2 UvrA and 2 UvrB subunits scans DNA for abnormalities. When the presence of a lesion has been verified by UvrB, the UvrA molecules dissociate. The protein is UvrABC system protein A of Streptococcus mutans serotype c (strain ATCC 700610 / UA159).